A 446-amino-acid chain; its full sequence is MSRKYFGTDGIRGRVGQFPITPDFMLKLGWAAGMAFRKQGHCRVLVGKDTRISGYMFESALEAGLSAAGADVMLLGPMPTPAIAYLTRTFHAEAGIVISASHNPHDDNGIKFFSGSGTKLPDEVELMIEELLDQPMTVVESGKLGKVSRINDAAGRYIEFCKSSVPSSTNFEGLKIVVDCAHGATYKVAPSVFRELGAEVTVLHASPDGLNINENCGSTHIESLQAAVLVGHADLGIAFDGDGDRVLMVDHTGAIVDGDELLYIIGRDLHDRNKLQGGVVGTLMSNLGLELAFKELDIPFVRAKVGDRYVMAELLEREWLLGGENSGHVVCCNHTTTGDAIIAALQVLMALKRKGETLAQARQGVRKCPQVLINVRFEAGKSDPLQNPLVKEASDKATEAMAGRGRVLLRKSGTEPLVRVMVEGDDENQVRGHAEALAKLVAEVCA.

Catalysis depends on S101, which acts as the Phosphoserine intermediate. Residues S101, D240, D242, and D244 each contribute to the Mg(2+) site. S101 bears the Phosphoserine mark.

Belongs to the phosphohexose mutase family. The cofactor is Mg(2+). In terms of processing, activated by phosphorylation.

The enzyme catalyses alpha-D-glucosamine 1-phosphate = D-glucosamine 6-phosphate. Catalyzes the conversion of glucosamine-6-phosphate to glucosamine-1-phosphate. This chain is Phosphoglucosamine mutase, found in Pseudomonas entomophila (strain L48).